Here is a 451-residue protein sequence, read N- to C-terminus: Phosphoglucosamine mutase (451 aa).

Residue serine 102 is the Phosphoserine intermediate of the active site. 4 residues coordinate Mg(2+): serine 102, aspartate 243, aspartate 245, and aspartate 247. A Phosphoserine modification is found at serine 102.

It belongs to the phosphohexose mutase family. Mg(2+) serves as cofactor. Activated by phosphorylation.

It catalyses the reaction alpha-D-glucosamine 1-phosphate = D-glucosamine 6-phosphate. In terms of biological role, catalyzes the conversion of glucosamine-6-phosphate to glucosamine-1-phosphate. The protein is Phosphoglucosamine mutase of Brucella abortus (strain 2308).